Reading from the N-terminus, the 695-residue chain is Hypersensitivity response secretion protein HrpI (695 aa).

7 helical membrane passes run 21 to 38, 45 to 61, 68 to 92, 111 to 135, 203 to 223, 244 to 262, and 311 to 327; these read LVGA…ITPL, VLIA…IMLA, LAFS…VSTT, FVVG…FLVI, AIAS…IGVL, GLIA…GMII, and VFIT…LLQL.

This sequence belongs to the FHIPEP (flagella/HR/invasion proteins export pore) family.

It is found in the cell inner membrane. In terms of biological role, involved in the secretion of harpin-pss; a proteinaceous elicitor of the hypersensitivity response in plants. The protein is Hypersensitivity response secretion protein HrpI (hrpI) of Pseudomonas syringae pv. syringae.